The primary structure comprises 209 residues: Mitochondrial import inner membrane translocase subunit Tim23 (209 aa).

Helical transmembrane passes span 73–93, 125–145, and 181–197; these read FELAFFTIGGCCMTGAAFGAM, ALWANTLGSLALLYSAFGVII, and GLTGLTLTSLYALYNNW.

This sequence belongs to the Tim17/Tim22/Tim23 family. In terms of assembly, component of the TIM23 complex at least composed of TIMM23, TIMM17 (TIMM17A or TIMM17B) and TIMM50; within this complex, directly interacts with TIMM50. The complex interacts with the TIMM44 component of the PAM complex and with DNAJC15. Upon mitochondrial depolarization, interacts with PINK1; the interaction is required for PINK1 accumulation at the outer mitochondrial membrane, kinase activation by autophosphorylation and PRKN recruitement to mitochondria.

The protein localises to the mitochondrion inner membrane. Functionally, essential component of the TIM23 complex, a complex that mediates the translocation of transit peptide-containing proteins across the mitochondrial inner membrane. Has a role in the activation of stress-induced mitophagy by protecting PINK1 from OMA1-mediated degradation and facilitating its accumulation at the outer mitochondrial membrane in response to depolarization. This Homo sapiens (Human) protein is Mitochondrial import inner membrane translocase subunit Tim23 (TIMM23).